Consider the following 515-residue polypeptide: Bifunctional purine biosynthesis protein PurH (515 aa).

Residues M1–V145 enclose the MGS-like domain.

This sequence belongs to the PurH family.

It catalyses the reaction (6R)-10-formyltetrahydrofolate + 5-amino-1-(5-phospho-beta-D-ribosyl)imidazole-4-carboxamide = 5-formamido-1-(5-phospho-D-ribosyl)imidazole-4-carboxamide + (6S)-5,6,7,8-tetrahydrofolate. It carries out the reaction IMP + H2O = 5-formamido-1-(5-phospho-D-ribosyl)imidazole-4-carboxamide. It participates in purine metabolism; IMP biosynthesis via de novo pathway; 5-formamido-1-(5-phospho-D-ribosyl)imidazole-4-carboxamide from 5-amino-1-(5-phospho-D-ribosyl)imidazole-4-carboxamide (10-formyl THF route): step 1/1. It functions in the pathway purine metabolism; IMP biosynthesis via de novo pathway; IMP from 5-formamido-1-(5-phospho-D-ribosyl)imidazole-4-carboxamide: step 1/1. This chain is Bifunctional purine biosynthesis protein PurH, found in Streptococcus pyogenes serotype M3 (strain ATCC BAA-595 / MGAS315).